A 227-amino-acid polypeptide reads, in one-letter code: KH domain-containing protein MJ0443 (227 aa).

2 consecutive KH domains span residues 14 to 77 and 106 to 163; these read KSIE…RDIV and DYAS…KEAV.

This Methanocaldococcus jannaschii (strain ATCC 43067 / DSM 2661 / JAL-1 / JCM 10045 / NBRC 100440) (Methanococcus jannaschii) protein is KH domain-containing protein MJ0443.